The sequence spans 421 residues: Phosphoglycerate kinase, cytosolic (421 aa).

(2R)-3-phosphoglycerate-binding residues include V23, D24, F25, N26, R39, S61, H62, G64, R65, R135, H172, and R173. The ADP site is built by G218 and A219. Position 218 (G218) interacts with CDP. AMP contacts are provided by A219 and K220. A219 is an ATP binding site. A219 contacts Mg(2+). K220 provides a ligand contact to (2R)-3-phosphoglycerate. D223 provides a ligand contact to CDP. Mg(2+) is bound at residue D223. ADP is bound by residues K224 and G242. K224 is a binding site for AMP. K224 provides a ligand contact to ATP. Residue G242 coordinates CDP. Residues A243 and A315 each contribute to the AMP site. The ATP site is built by A243 and A315. 2 residues coordinate ADP: A315 and N339. CDP contacts are provided by G340 and F345. Residues F345, E346, D378, and S379 each contribute to the ADP site. Residue E346 coordinates AMP. Positions 346, 378, and 379 each coordinate ATP. D378 contributes to the Mg(2+) binding site.

The protein belongs to the phosphoglycerate kinase family. In terms of assembly, monomer. Mg(2+) is required as a cofactor.

It is found in the cytoplasm. The catalysed reaction is (2R)-3-phosphoglycerate + ATP = (2R)-3-phospho-glyceroyl phosphate + ADP. It participates in carbohydrate degradation; glycolysis; pyruvate from D-glyceraldehyde 3-phosphate: step 2/5. This chain is Phosphoglycerate kinase, cytosolic, found in Trypanosoma brucei brucei.